An 86-amino-acid polypeptide reads, in one-letter code: Cell division topological specificity factor (86 aa).

This sequence belongs to the MinE family.

Prevents the cell division inhibition by proteins MinC and MinD at internal division sites while permitting inhibition at polar sites. This ensures cell division at the proper site by restricting the formation of a division septum at the midpoint of the long axis of the cell. The sequence is that of Cell division topological specificity factor from Shewanella piezotolerans (strain WP3 / JCM 13877).